The sequence spans 91 residues: Non-specific lipid-transfer protein 1 (91 aa).

4 disulfides stabilise this stretch: C3–C50, C13–C27, C28–C73, and C48–C87. A 1,2-diacyl-sn-glycero-3-phosphocholine-binding residues include R44 and Y79.

Monomer.

In terms of biological role, plant non-specific lipid-transfer proteins transfer phospholipids as well as galactolipids across membranes. May play a role in wax or cutin deposition in the cell walls of expanding epidermal cells and certain secretory tissues. Has antifungal activity against F.solani, F.oxysporum, P.aphanidermatum and S.rolfsii. Has antibacterial activity against the Gram-positive bacterium S.aureus but not against the Gram-negative bacterium S.typhimurium. In Vigna radiata var. radiata (Mung bean), this protein is Non-specific lipid-transfer protein 1.